We begin with the raw amino-acid sequence, 50 residues long: Small ribosomal subunit protein uS14 (50 aa).

Zn(2+) contacts are provided by cysteine 15, cysteine 18, cysteine 33, and cysteine 36.

Belongs to the universal ribosomal protein uS14 family. Zinc-binding uS14 subfamily. Part of the 30S ribosomal subunit. Zn(2+) serves as cofactor.

Its function is as follows. Binds 16S rRNA, required for the assembly of 30S particles. In Methanothermobacter thermautotrophicus (strain ATCC 29096 / DSM 1053 / JCM 10044 / NBRC 100330 / Delta H) (Methanobacterium thermoautotrophicum), this protein is Small ribosomal subunit protein uS14.